A 246-amino-acid chain; its full sequence is Myogenic factor 5 (246 aa).

The segment at R1–C38 is disordered. Positions D73–L124 constitute a bHLH domain. Positions E210–L246 are disordered. A compositionally biased stretch (pro residues) spans G236–L246.

As to quaternary structure, efficient DNA binding requires dimerization with another bHLH protein.

The protein localises to the nucleus. Functionally, acts as a transcriptional activator that promotes transcription of muscle-specific target genes and plays a role in muscle differentiation. Induces fibroblasts to differentiate into myoblasts. Probable sequence specific DNA-binding protein. The chain is Myogenic factor 5 (MYF5) from Coturnix japonica (Japanese quail).